The primary structure comprises 315 residues: Tyrosine recombinase XerC (315 aa).

In terms of domain architecture, Core-binding (CB) spans 1–103 (MITSFYAFLD…AIKSFARFCV (103 aa)). A Tyr recombinase domain is found at 124–306 (ELPSPLTYEQ…SMKLKKQIHD (183 aa)). Active-site residues include Arg-164, Lys-188, His-258, Arg-261, and His-284. Tyr-293 acts as the O-(3'-phospho-DNA)-tyrosine intermediate in catalysis.

The protein belongs to the 'phage' integrase family. XerC subfamily. In terms of assembly, forms a cyclic heterotetrameric complex composed of two molecules of XerC and two molecules of XerD.

The protein resides in the cytoplasm. In terms of biological role, site-specific tyrosine recombinase, which acts by catalyzing the cutting and rejoining of the recombining DNA molecules. The XerC-XerD complex is essential to convert dimers of the bacterial chromosome into monomers to permit their segregation at cell division. It also contributes to the segregational stability of plasmids. The protein is Tyrosine recombinase XerC of Chlamydia trachomatis serovar L2b (strain UCH-1/proctitis).